Consider the following 109-residue polypeptide: Probable glutaredoxin slr1562 (109 aa).

The region spanning 11-109 (LSGRQADGIK…PLLATPPNPA (99 aa)) is the Glutaredoxin domain. A disulfide bridge connects residues Cys-31 and Cys-34.

It belongs to the glutaredoxin family.

Functionally, has a glutathione-disulfide oxidoreductase activity in the presence of NADPH and glutathione reductase. Reduces low molecular weight disulfides and proteins. This chain is Probable glutaredoxin slr1562, found in Synechocystis sp. (strain ATCC 27184 / PCC 6803 / Kazusa).